The primary structure comprises 291 residues: Elongation factor Ts (291 aa).

Residues 79–82 (TDFV) are involved in Mg(2+) ion dislocation from EF-Tu.

Belongs to the EF-Ts family.

It localises to the cytoplasm. Functionally, associates with the EF-Tu.GDP complex and induces the exchange of GDP to GTP. It remains bound to the aminoacyl-tRNA.EF-Tu.GTP complex up to the GTP hydrolysis stage on the ribosome. The sequence is that of Elongation factor Ts from Ruegeria pomeroyi (strain ATCC 700808 / DSM 15171 / DSS-3) (Silicibacter pomeroyi).